A 106-amino-acid polypeptide reads, in one-letter code: Large ribosomal subunit protein eL42 (106 aa).

It belongs to the eukaryotic ribosomal protein eL42 family.

The sequence is that of Large ribosomal subunit protein eL42 (RPL44) from Schwanniomyces occidentalis (Yeast).